Here is a 329-residue protein sequence, read N- to C-terminus: Eukaryotic translation initiation factor 2 subunit 1 (329 aa).

The S1 motif domain occupies 24 to 95; it reads DDLIMVKVNR…QKGYIDLSKR (72 aa). S59 carries the post-translational modification Phosphoserine; by eIK1, eIK2 and PK4. The tract at residues 291–329 is disordered; it reads LDKHDGISSDDDDYNTSDEDDENSSEEDENTSEDEEEED. The span at 298–329 shows a compositional bias: acidic residues; that stretch reads SSDDDDYNTSDEDDENSSEEDENTSEDEEEED.

The protein belongs to the eIF-2-alpha family. In terms of processing, phosphorylated at Ser-59 by eIK1 in response to amino acid starvation. Phosphorylates at Ser-59 in schizonts and gametocytes but not in rings and young trophozoites. Phosphorylates at Ser-59 by eIK2 in salivary gland sporozoites but not in midgut and hemocoel sporozoites. Dephosphorylated at Ser-59 by UIS2. Phosphorylation of eIF2alpha subunit of the pre-initiation complex eIF2 inhibits recycling of inactive eIF2-GDP to active eIF2-GTP by limiting the activity of the guanine nucleotide exchange factor eIF2B and thus, inhibits protein translation.

It localises to the cytoplasm. Its subcellular location is the stress granule. Its function is as follows. Functions in the early steps of protein synthesis by forming a ternary complex with GTP and initiator tRNA. May regulate protein translation in response to amino acid starvation. May regulate protein at various stages of parasite development. The sequence is that of Eukaryotic translation initiation factor 2 subunit 1 from Plasmodium falciparum (isolate 3D7).